The primary structure comprises 339 residues: MFYKIAQKVMFQMDPERAHHLAIGSLKMTANSPLTCLYGQTITPAPVSVMGLTFPNPVGLAAGMDKDGESIDAFHAMGFGHVEVGTVTPRPQPGNDLPRLFRLKPAKGIINRMGFNNKGVDNLVKNLIAKKTDIMVGVNIGKNKDTPVEQGKDDYLICMDKVYLHAAYIAVNISSPNTPGLRSLQYGDLLDELLSAIKTKQLELAEKHKKYVPIALKIAPDLTIEEIENIAQALIKNKFDGAIATNTTLTRDGVSGLANANESGGLSGKPLTELSTKVIKQLAICLKGQIPIIGVGGINSAEDALAKFDAGATMVQIYSGFIYQGPKLIKEIVNAYRLK.

FMN contacts are provided by residues 62–66 (AGMDK) and T86. K66 contributes to the substrate binding site. A substrate-binding site is contributed by 111-115 (NRMGF). Residues N139 and N172 each coordinate FMN. Residue N172 coordinates substrate. Catalysis depends on S175, which acts as the Nucleophile. Residue N177 coordinates substrate. Residues K217 and T245 each coordinate FMN. Position 246 to 247 (246 to 247 (NT)) interacts with substrate. FMN is bound by residues G268, G297, and 318 to 319 (YS).

It belongs to the dihydroorotate dehydrogenase family. Type 2 subfamily. As to quaternary structure, monomer. It depends on FMN as a cofactor.

It is found in the cell membrane. The enzyme catalyses (S)-dihydroorotate + a quinone = orotate + a quinol. It participates in pyrimidine metabolism; UMP biosynthesis via de novo pathway; orotate from (S)-dihydroorotate (quinone route): step 1/1. In terms of biological role, catalyzes the conversion of dihydroorotate to orotate with quinone as electron acceptor. This chain is Dihydroorotate dehydrogenase (quinone), found in Shewanella baltica (strain OS223).